Here is a 331-residue protein sequence, read N- to C-terminus: tRNA U34 carboxymethyltransferase (331 aa).

Residues lysine 91, tryptophan 105, lysine 110, glycine 130, 152–154 (DPS), 181–182 (IE), methionine 196, tyrosine 200, and arginine 315 each bind carboxy-S-adenosyl-L-methionine.

Belongs to the class I-like SAM-binding methyltransferase superfamily. CmoB family. As to quaternary structure, homotetramer.

The catalysed reaction is carboxy-S-adenosyl-L-methionine + 5-hydroxyuridine(34) in tRNA = 5-carboxymethoxyuridine(34) in tRNA + S-adenosyl-L-homocysteine + H(+). Functionally, catalyzes carboxymethyl transfer from carboxy-S-adenosyl-L-methionine (Cx-SAM) to 5-hydroxyuridine (ho5U) to form 5-carboxymethoxyuridine (cmo5U) at position 34 in tRNAs. In Shewanella baltica (strain OS185), this protein is tRNA U34 carboxymethyltransferase.